The following is a 459-amino-acid chain: Elongation factor 1-alpha (459 aa).

Residue Gly-2 is modified to N,N,N-trimethylglycine. Lys-3 carries the N6,N6-dimethyllysine; alternate modification. Position 3 is an N6-methyllysine; alternate (Lys-3). Positions 5 to 239 constitute a tr-type G domain; sequence KSHINVVVIG…DAIDPPSRPT (235 aa). Residues 14–21 form a G1 region; the sequence is GHVDSGKS. 14–21 provides a ligand contact to GTP; it reads GHVDSGKS. Position 30 is an N6-methyllysine (Lys-30). Residues 70 to 74 form a G2 region; that stretch reads GITID. At Lys-79 the chain carries N6,N6,N6-trimethyllysine. A G3 region spans residues 91-94; the sequence is DAPG. Residues 91 to 95 and 153 to 156 contribute to the GTP site; these read DAPGH and NKMD. The tract at residues 153 to 156 is G4; it reads NKMD. The interval 192-194 is G5; the sequence is SGF. N6,N6-dimethyllysine; alternate is present on Lys-315. The residue at position 315 (Lys-315) is an N6-methyllysine; alternate. At Lys-389 the chain carries N6-methyllysine.

This sequence belongs to the TRAFAC class translation factor GTPase superfamily. Classic translation factor GTPase family. EF-Tu/EF-1A subfamily.

Its subcellular location is the cytoplasm. In terms of biological role, this protein promotes the GTP-dependent binding of aminoacyl-tRNA to the A-site of ribosomes during protein biosynthesis. This Aureobasidium pullulans (Black yeast) protein is Elongation factor 1-alpha (TEF1).